The primary structure comprises 248 residues: MNQTNFGFKKVDYTKKQGLVNNVFSNVADKYDLMNDLMSLGLHRLWKDEFIRQIPNLNSHILDVASGSGDIALKLAKKARDRVNNISLTLSDINEEMLKQAKKKAIDLNLFQNLKFTVASAEELPFLDDSFDYYTIAFGIRNVPDINKALKEACRVLKPMGKFICLEFSKVKEGYMKDFYKFYSFNIIPSIGQMIAGNKEAYEYLVESIDLFPSQDEFRIMIKDAGFEEVGYKNLSGGIVAIHSAYTR.

S-adenosyl-L-methionine is bound by residues Ser68 and Asp92.

The protein belongs to the class I-like SAM-binding methyltransferase superfamily. MenG/UbiE family.

The catalysed reaction is a 2-demethylmenaquinol + S-adenosyl-L-methionine = a menaquinol + S-adenosyl-L-homocysteine + H(+). The enzyme catalyses a 2-methoxy-6-(all-trans-polyprenyl)benzene-1,4-diol + S-adenosyl-L-methionine = a 5-methoxy-2-methyl-3-(all-trans-polyprenyl)benzene-1,4-diol + S-adenosyl-L-homocysteine + H(+). The protein operates within quinol/quinone metabolism; menaquinone biosynthesis; menaquinol from 1,4-dihydroxy-2-naphthoate: step 2/2. It functions in the pathway cofactor biosynthesis; ubiquinone biosynthesis. In terms of biological role, methyltransferase required for the conversion of demethylmenaquinol (DMKH2) to menaquinol (MKH2) and the conversion of 2-polyprenyl-6-methoxy-1,4-benzoquinol (DDMQH2) to 2-polyprenyl-3-methyl-6-methoxy-1,4-benzoquinol (DMQH2). This chain is Ubiquinone/menaquinone biosynthesis C-methyltransferase UbiE, found in Rickettsia peacockii (strain Rustic).